The chain runs to 269 residues: Thyroxine 5-deiodinase (269 aa).

Residues 1-14 (MLPAPHTCCRLLQQ) are Cytoplasmic-facing. A helical; Signal-anchor for type II membrane protein transmembrane segment spans residues 15–35 (LLACCLLLPRFLLTVLLLWLL). Residues 36–269 (DFPCVRRRVI…TGNGALVIQV (234 aa)) are Extracellular-facing. The active site involves Sec133. Residue Sec133 is a non-standard amino acid, selenocysteine.

The protein belongs to the iodothyronine deiodinase family. As to quaternary structure, monomer. Homodimer. May undergo minor heretodimerization with DIO1 and DIO2.

The protein resides in the cell membrane. It is found in the endosome membrane. It catalyses the reaction 3,3',5'-triiodo-L-thyronine + iodide + A + H(+) = L-thyroxine + AH2. It carries out the reaction 3,3'-diiodo-L-thyronine + iodide + A + H(+) = 3,3',5-triiodo-L-thyronine + AH2. The enzyme catalyses 3-iodo-L-thyronine + iodide + A + H(+) = 3,5-diiodo-L-thyronine + AH2. The catalysed reaction is L-thyronine + iodide + A + H(+) = 3-iodo-L-thyronine + AH2. It catalyses the reaction 3',5'-diiodo-L-thyronine + iodide + A + H(+) = 3,3',5'-triiodo-L-thyronine + AH2. It carries out the reaction 3'-iodo-L-thyronine + iodide + A + H(+) = 3,3'-diiodo-L-thyronine + AH2. The enzyme catalyses 3,3',5'-triiodothyronamine + iodide + A + H(+) = 3,3',5,5'-tetraiodothyronamine + AH2. The catalysed reaction is 3',5'-diiodothyronamine + iodide + A + H(+) = 3,3',5'-triiodothyronamine + AH2. It catalyses the reaction 3,3'-diiodothyronamine + iodide + A + H(+) = 3,3',5-triiodothyronamine + AH2. It carries out the reaction 3-iodothyronamine + iodide + A + H(+) = 3,5-diiodothyronamine + AH2. The enzyme catalyses 3'-iodothyronamine + iodide + A + H(+) = 3,3'-diiodothyronamine + AH2. The catalysed reaction is thyronamine + iodide + A + H(+) = 3-iodothyronamine + AH2. In terms of biological role, plays a crucial role in the metabolism of thyroid hormones (TH) and has specific roles in TH activation and inactivation by deiodination. Catalyzes the deiodination of L-thyroxine (T4) to 3,3',5'-triiodothyronine (rT3), 3,5-diiodothyronine (3,5-T2) to 3-monoiodothyronine (3-T1), rT3 to 3',5'-diiodothyronine (3',5'-T2) and 3,3'-diiodothyronine (3,3'-T2) to 3'-monoiodothyronine (3'-T1) via inner-ring deiodination (IRD). Catalyzes the deiodination of 3,5,3'-triiodothyronine (T3) to 3,3'-diiodothyronine (3,3'-T2) via IRD. Catalyzes the deiodination of 3-T1 to L-thyronine (T0) via outer-ring deiodination (ORD). Catalyzes the tyrosyl ring deiodinations of 3,3',5,5'-tetraiodothyronamine, 3,3',5'-triiodothyronamine, 3,5,3'-triiodothyronamine, 3,5-diiodothyronamine, 3,3'-diiodothyronamine and 3-iodothyronamine. In Aquarana catesbeiana (American bullfrog), this protein is Thyroxine 5-deiodinase (dio3).